Consider the following 422-residue polypeptide: Glutamate-1-semialdehyde 2,1-aminomutase (422 aa).

At Lys-264 the chain carries N6-(pyridoxal phosphate)lysine.

Belongs to the class-III pyridoxal-phosphate-dependent aminotransferase family. HemL subfamily. Homodimer. Pyridoxal 5'-phosphate is required as a cofactor.

The protein resides in the cytoplasm. The catalysed reaction is (S)-4-amino-5-oxopentanoate = 5-aminolevulinate. Its pathway is porphyrin-containing compound metabolism; protoporphyrin-IX biosynthesis; 5-aminolevulinate from L-glutamyl-tRNA(Glu): step 2/2. The protein is Glutamate-1-semialdehyde 2,1-aminomutase of Clostridium tetani (strain Massachusetts / E88).